We begin with the raw amino-acid sequence, 468 residues long: Glutamate--tRNA ligase (468 aa).

The short motif at 9–19 (PSPTGYLHVGG) is the 'HIGH' region element. Residues cysteine 98, cysteine 100, cysteine 125, and aspartate 127 each contribute to the Zn(2+) site. Positions 235–239 (KLSKR) match the 'KMSKS' region motif. Lysine 238 is a binding site for ATP.

Belongs to the class-I aminoacyl-tRNA synthetase family. Glutamate--tRNA ligase type 1 subfamily. As to quaternary structure, monomer. It depends on Zn(2+) as a cofactor.

It is found in the cytoplasm. The enzyme catalyses tRNA(Glu) + L-glutamate + ATP = L-glutamyl-tRNA(Glu) + AMP + diphosphate. Functionally, catalyzes the attachment of glutamate to tRNA(Glu) in a two-step reaction: glutamate is first activated by ATP to form Glu-AMP and then transferred to the acceptor end of tRNA(Glu). The sequence is that of Glutamate--tRNA ligase from Idiomarina loihiensis (strain ATCC BAA-735 / DSM 15497 / L2-TR).